The primary structure comprises 476 residues: Aspartyl/glutamyl-tRNA(Asn/Gln) amidotransferase subunit B (476 aa).

The protein belongs to the GatB/GatE family. GatB subfamily. In terms of assembly, heterotrimer of A, B and C subunits.

It catalyses the reaction L-glutamyl-tRNA(Gln) + L-glutamine + ATP + H2O = L-glutaminyl-tRNA(Gln) + L-glutamate + ADP + phosphate + H(+). The enzyme catalyses L-aspartyl-tRNA(Asn) + L-glutamine + ATP + H2O = L-asparaginyl-tRNA(Asn) + L-glutamate + ADP + phosphate + 2 H(+). Allows the formation of correctly charged Asn-tRNA(Asn) or Gln-tRNA(Gln) through the transamidation of misacylated Asp-tRNA(Asn) or Glu-tRNA(Gln) in organisms which lack either or both of asparaginyl-tRNA or glutaminyl-tRNA synthetases. The reaction takes place in the presence of glutamine and ATP through an activated phospho-Asp-tRNA(Asn) or phospho-Glu-tRNA(Gln). This is Aspartyl/glutamyl-tRNA(Asn/Gln) amidotransferase subunit B from Bacillus velezensis (strain DSM 23117 / BGSC 10A6 / LMG 26770 / FZB42) (Bacillus amyloliquefaciens subsp. plantarum).